The sequence spans 959 residues: E3 ubiquitin-protein ligase arkadia-B (959 aa).

Over residues 51–66 (CSDTNKQQSDLNSNGT) the composition is skewed to polar residues. 3 disordered regions span residues 51–171 (CSDT…VSSL), 189–212 (RKRFVKNVSSQRTQKQKERMMLQR), and 225–271 (LLPS…SGGM). Positions 112–131 (SSFSDCISSPSSSSHFGDSD) are enriched in low complexity. The segment covering 142–156 (PLSSVNSTPRTQSAR) has biased composition (polar residues). The span at 228 to 246 (SSSSSSENDLSSESSSSSS) shows a compositional bias: low complexity. A compositionally biased stretch (polar residues) spans 256-267 (TGENRQDGTTLP). The SUMO interaction motif 1 (SIM) signature appears at 275-279 (VVVIE). The short motif at 300-306 (EVEIVTV) is the SUMO interaction motif 2 (SIM) element. A disordered region spans residues 318–341 (HPRSHWGQNSQSGRTQEQRTRNRV). Polar residues predominate over residues 323–332 (WGQNSQSGRT). The SUMO interaction motif 3 (SIM) motif lies at 355 to 359 (VVDLT). A compositionally biased stretch (polar residues) spans 370–397 (TTSGRVESQPVSIVSSLTSTSEPASDSM). Disordered regions lie at residues 370–399 (TTSGRVESQPVSIVSSLTSTSEPASDSMSG), 475–499 (HFPHHHHHHHHSSHPGVPLSPSFRD), 615–649 (PRPLHHQTSSCPHSNSASQPPPPPPPPPPPPMDYV), and 661–680 (PSLTSTHAVPPPPPSHHLSA). A compositionally biased stretch (basic residues) spans 475–487 (HFPHHHHHHHHSS). The segment covering 620-632 (HQTSSCPHSNSAS) has biased composition (polar residues). Residues 633 to 646 (QPPPPPPPPPPPPM) are compositionally biased toward pro residues. The segment at 872 to 874 (YPH) is ubiquitin binding. Cysteine 907 and cysteine 910 together coordinate Zn(2+). The RING-type; atypical zinc finger occupies 907 to 948 (CTICLSILEEGEDVRRLPCMHLFHQVCVDQWLITNKKCPICR). The segment at 922–926 (RLPCM) is ubiquitin binding. Zn(2+) is bound by residues histidine 930 and cysteine 933.

It belongs to the Arkadia family. In terms of assembly, monomer.

It is found in the nucleus. The protein localises to the cytoplasm. It localises to the PML body. It carries out the reaction S-ubiquitinyl-[E2 ubiquitin-conjugating enzyme]-L-cysteine + [acceptor protein]-L-lysine = [E2 ubiquitin-conjugating enzyme]-L-cysteine + N(6)-ubiquitinyl-[acceptor protein]-L-lysine.. It participates in protein modification; protein ubiquitination. Its activity is regulated as follows. Binds free ubiquitin non-covalently via its RING-type zinc finger. Ubiquitin-binding leads to enhance the E3 ubiquitin-protein ligase activity by stabilizing the ubiquitin-conjugating enzyme E2 (donor ubiquitin) in the 'closed' conformation and activating ubiquitin transfer. In terms of biological role, E3 ubiquitin-protein ligase required for mesoderm patterning during embryonic development. Acts as an enhancer of the transcriptional responses of the smad2/smad3 effectors, which are activated downstream of BMP. Acts by mediating ubiquitination and degradation of SMAD inhibitors such as smad7, inducing their proteasomal degradation and thereby enhancing the transcriptional activity of TGF-beta and BMP. Specifically binds polysumoylated chains via SUMO interaction motifs (SIMs) and mediates ubiquitination of sumoylated substrates. The regulation of the BMP-SMAD signaling is however independent of sumoylation and is not dependent of SUMO interaction motifs (SIMs). This chain is E3 ubiquitin-protein ligase arkadia-B (rnf111-b), found in Xenopus laevis (African clawed frog).